The chain runs to 200 residues: Regulator of G-protein signaling 16 (200 aa).

Residues Cys2 and Cys12 are each lipidated (S-palmitoyl cysteine). The RGS domain maps to 65 to 181 (SFDLLLSSKN…LKSPAYRDLA (117 aa)). Phosphotyrosine occurs at positions 168 and 177.

As to quaternary structure, interacts with GNAI1 and GNAQ. Interacts with GNAI3, GNAI3 and GNAO1. (Microbial infection) Interacts with porcine circovirus 2 ORF3 protein. Palmitoylated on Cys-2 and/or Cys-12. Post-translationally, phosphorylated. Phosphorylation at Tyr-168 by EGFR enhances GTPase accelerating (GAP) activity toward GNAI1.

Its subcellular location is the membrane. In terms of biological role, regulates G protein-coupled receptor signaling cascades. Inhibits signal transduction by increasing the GTPase activity of G protein alpha subunits, thereby driving them into their inactive GDP-bound form. Plays an important role in the phototransduction cascade by regulating the lifetime and effective concentration of activated transducin alpha. May regulate extra and intracellular mitogenic signals. (Microbial infection) Gets inactivated and/or degraded by porcine circovirus 2 ORF3 protein, leading to enhanced expression of IL-6 and IL-8 in infected lymphocytes. This would explain chronic inflammatory response of PCV2 infected pigs. This is Regulator of G-protein signaling 16 (RGS16) from Sus scrofa (Pig).